A 421-amino-acid chain; its full sequence is 4-hydroxy-3-methylbut-2-en-1-yl diphosphate synthase (flavodoxin) (421 aa).

[4Fe-4S] cluster-binding residues include C300, C303, C346, and E353.

It belongs to the IspG family. Requires [4Fe-4S] cluster as cofactor.

It carries out the reaction (2E)-4-hydroxy-3-methylbut-2-enyl diphosphate + oxidized [flavodoxin] + H2O + 2 H(+) = 2-C-methyl-D-erythritol 2,4-cyclic diphosphate + reduced [flavodoxin]. Its pathway is isoprenoid biosynthesis; isopentenyl diphosphate biosynthesis via DXP pathway; isopentenyl diphosphate from 1-deoxy-D-xylulose 5-phosphate: step 5/6. Its function is as follows. Converts 2C-methyl-D-erythritol 2,4-cyclodiphosphate (ME-2,4cPP) into 1-hydroxy-2-methyl-2-(E)-butenyl 4-diphosphate. The protein is 4-hydroxy-3-methylbut-2-en-1-yl diphosphate synthase (flavodoxin) of Laribacter hongkongensis (strain HLHK9).